The primary structure comprises 210 residues: Putative tyrosine-protein phosphatase OCA1 (210 aa).

Residues asparagine 44–tryptophan 204 enclose the Tyrosine-protein phosphatase domain. Cysteine 140 acts as the Phosphocysteine intermediate in catalysis.

Belongs to the protein-tyrosine phosphatase family.

It localises to the cytoplasm. The catalysed reaction is O-phospho-L-tyrosyl-[protein] + H2O = L-tyrosyl-[protein] + phosphate. Functionally, putative tyrosine-protein phosphatase required for protection against superoxide stress. This Kluyveromyces lactis (strain ATCC 8585 / CBS 2359 / DSM 70799 / NBRC 1267 / NRRL Y-1140 / WM37) (Yeast) protein is Putative tyrosine-protein phosphatase OCA1 (OCA1).